Reading from the N-terminus, the 894-residue chain is MKRRKFSSVVAAVLIFALIFSLFSPGTKAAAAGAIDQAAALENGKEQTGAMKEPEQVKWYKVTPGATDIQKNSHMALTVKSDSVLNVSVYPSKEKALKDETFEMYRSFTAEDGKSEVIFPYAWSGPYYVKVEYLGEEEPEDGGTAEAAAEAKYTIGYKGTKKQPSDLEEEEACPVEMSVDQKKSGKGILDKLRSIRDEQLSQTAEGKELTSLYYKAAPFIVAKLALNKTARNEIYQDLVTLKPLFDDVSENGASSSYKVTEKDQKAINRLYDKALQSVPSFLKEEIKKQADRLNMKQLQGKTAGAILTENNIAAKSEVQTTKVIFKVKDNKSLSSVHNEMKGFSASAQSKKDISNVKKAKKLFDNLYSFELPKDEKQNGAYTASAKRVKSAAATLSKMSNVEFAEPVQEYKSLANDIQYPYQWPLKNNGENGGVKNADVKYEPANTLLSKRKLNDTLIAVVDTGVDSTLADLKGKVRTDLGHNFVGRNNNAMDDQGHGTHVAGIIAAQSDNGYSMTGLNAKAKIIPVKVLDSAGSGDTEQIALGIKYAADKGAKVINLSLGGGYSRVLEFALKYAADKNVLIAAASGNDGENALSYPASSKYVMSVGATNRMDMTADFSNYGKGLDISAPGSDIPSLVPNGNVTYMSGTSMATPYAAAAAGLLFAQNPKLKRTEVEDMLKKTADDISFESVDGGEEELYDDYGDPIEIPKTPGVDWHSGYGRLNVMKAVSAADLQLKVNKLESTQTAVRGSAKEGTLIEVMNGKKKLGSAKAGKDNAFKVNIATQKQDQVLYLKATKGDAKTSYKVVVVKGKPSGTPKVNAVKTKDTAVKGKANSKAMIRVKNKSKKVIASAKADAKGTFSVKIKKQKAGTVLYVTAVDTDKKESKEAKVVVEK.

A signal peptide spans 1-31 (MKRRKFSSVVAAVLIFALIFSLFSPGTKAAA). One can recognise a Peptidase S8 domain in the interval 422-729 (QWPLKNNGEN…YGRLNVMKAV (308 aa)). Catalysis depends on charge relay system residues aspartate 462, histidine 497, and serine 650.

The protein belongs to the peptidase S8 family. In terms of processing, proteolytically cleaved to yield CWBP23 and CWBP52.

The protein localises to the secreted. The protein resides in the cell wall. With respect to regulation, inhibited by PMSF. Functionally, CWBP52 is a serine-type protease that could be involved in proteoglycan peptide bridges. In Bacillus subtilis (strain 168), this protein is Cell wall-associated protease (wprA).